The chain runs to 155 residues: MSRENATEEKTTKPDPIYRNRLISMLVNRILRNGKKSLAHRILYGAMSSTRRDTGKNPLLILRQAMIKVTPDVVVKAKRIGGSTYQVPLEVGSMQGKALAIRWLLTASRKRSGRNMASKLGYELIDAAKDNGTAVRRKEETHKMAEANRAFAHFR.

This sequence belongs to the universal ribosomal protein uS7 family. In terms of assembly, part of the 30S ribosomal subunit.

It is found in the plastid. One of the primary rRNA binding proteins, it binds directly to 16S rRNA where it nucleates assembly of the head domain of the 30S subunit. This Aneura mirabilis (Parasitic liverwort) protein is Small ribosomal subunit protein uS7c (rps7).